The following is a 388-amino-acid chain: Succinate--CoA ligase [ADP-forming] subunit beta (388 aa).

The region spanning 9–244 (KEILRKFGVA…LDEEDPAEIE (236 aa)) is the ATP-grasp domain. ATP contacts are provided by residues Lys-46, 53–55 (GRG), Glu-99, Ala-102, and Glu-107. The Mg(2+) site is built by Asn-199 and Asp-213. Residues Asn-264 and 321–323 (GIM) each bind substrate.

This sequence belongs to the succinate/malate CoA ligase beta subunit family. In terms of assembly, heterotetramer of two alpha and two beta subunits. It depends on Mg(2+) as a cofactor.

The catalysed reaction is succinate + ATP + CoA = succinyl-CoA + ADP + phosphate. It carries out the reaction GTP + succinate + CoA = succinyl-CoA + GDP + phosphate. Its pathway is carbohydrate metabolism; tricarboxylic acid cycle; succinate from succinyl-CoA (ligase route): step 1/1. Its function is as follows. Succinyl-CoA synthetase functions in the citric acid cycle (TCA), coupling the hydrolysis of succinyl-CoA to the synthesis of either ATP or GTP and thus represents the only step of substrate-level phosphorylation in the TCA. The beta subunit provides nucleotide specificity of the enzyme and binds the substrate succinate, while the binding sites for coenzyme A and phosphate are found in the alpha subunit. In Burkholderia vietnamiensis (strain G4 / LMG 22486) (Burkholderia cepacia (strain R1808)), this protein is Succinate--CoA ligase [ADP-forming] subunit beta.